A 371-amino-acid chain; its full sequence is N-acetyllactosaminide alpha-2,3-sialyltransferase (371 aa).

A CMP-N-acetyl-beta-neuraminate-binding site is contributed by glycine 255. Aspartate 258 (proton acceptor) is an active-site residue. CMP-N-acetyl-beta-neuraminate contacts are provided by residues 278–282 (APHPR), 299–300 (IE), and 322–323 (SG). Histidine 280 (proton donor) is an active-site residue.

Belongs to the glycosyltransferase 52 family. Homodimer.

The protein resides in the cell outer membrane. The enzyme catalyses a beta-D-galactosyl-(1-&gt;4)-N-acetyl-beta-D-glucosaminyl derivative + CMP-N-acetyl-beta-neuraminate = an N-acetyl-alpha-neuraminyl-(2-&gt;3)-beta-D-galactosyl-(1-&gt;4)-N-acetyl-beta-D-glucosaminyl derivative + CMP + H(+). It functions in the pathway bacterial outer membrane biogenesis; lipooligosaccharide biosynthesis. Functionally, catalyzes the transfer of sialic acid from the substrate CMP-N-acetylneuraminate to the terminal galactose residue of the lacto-N-neotetraose branch of surface lipooligosaccharide (LOS), forming an alpha-2,3-sialyl linkage. Thus, functions in the sialylation of LOS, which plays a role in the evasion of the host immune response by protecting N.meningitidis from complement-mediated serum killing and from phagocytic killing by neutrophils. In Neisseria meningitidis serogroup A / serotype 4A (strain DSM 15465 / Z2491), this protein is N-acetyllactosaminide alpha-2,3-sialyltransferase.